A 290-amino-acid polypeptide reads, in one-letter code: Ribosomal protein L11 methyltransferase (290 aa).

4 residues coordinate S-adenosyl-L-methionine: Thr135, Gly158, Asp180, and Asn227.

It belongs to the methyltransferase superfamily. PrmA family.

It is found in the cytoplasm. The catalysed reaction is L-lysyl-[protein] + 3 S-adenosyl-L-methionine = N(6),N(6),N(6)-trimethyl-L-lysyl-[protein] + 3 S-adenosyl-L-homocysteine + 3 H(+). Its function is as follows. Methylates ribosomal protein L11. The protein is Ribosomal protein L11 methyltransferase of Chelativorans sp. (strain BNC1).